Consider the following 260-residue polypeptide: Pyridoxine 5'-phosphate synthase (260 aa).

Position 6 (Asn-6) interacts with 3-amino-2-oxopropyl phosphate. 8–9 (DH) is a binding site for 1-deoxy-D-xylulose 5-phosphate. Arg-17 contacts 3-amino-2-oxopropyl phosphate. His-42 serves as the catalytic Proton acceptor. Residues Arg-44 and His-49 each contribute to the 1-deoxy-D-xylulose 5-phosphate site. The active-site Proton acceptor is the Glu-69. Thr-99 provides a ligand contact to 1-deoxy-D-xylulose 5-phosphate. Residue His-213 is the Proton donor of the active site. Residues Gly-214 and 235 to 236 (GQ) contribute to the 3-amino-2-oxopropyl phosphate site.

It belongs to the PNP synthase family. Homooctamer; tetramer of dimers.

It is found in the cytoplasm. The catalysed reaction is 3-amino-2-oxopropyl phosphate + 1-deoxy-D-xylulose 5-phosphate = pyridoxine 5'-phosphate + phosphate + 2 H2O + H(+). Its pathway is cofactor biosynthesis; pyridoxine 5'-phosphate biosynthesis; pyridoxine 5'-phosphate from D-erythrose 4-phosphate: step 5/5. Its function is as follows. Catalyzes the complicated ring closure reaction between the two acyclic compounds 1-deoxy-D-xylulose-5-phosphate (DXP) and 3-amino-2-oxopropyl phosphate (1-amino-acetone-3-phosphate or AAP) to form pyridoxine 5'-phosphate (PNP) and inorganic phosphate. This is Pyridoxine 5'-phosphate synthase from Sulfurimonas denitrificans (strain ATCC 33889 / DSM 1251) (Thiomicrospira denitrificans (strain ATCC 33889 / DSM 1251)).